The chain runs to 215 residues: Mediator of RNA polymerase II transcription subunit 20 (215 aa).

The protein belongs to the Mediator complex subunit 20 family. As to quaternary structure, component of the Mediator complex.

It is found in the nucleus. Functionally, component of the Mediator complex, a coactivator involved in the regulated transcription of nearly all RNA polymerase II-dependent genes. Mediator functions as a bridge to convey information from gene-specific regulatory proteins to the basal RNA polymerase II transcription machinery. Mediator is recruited to promoters by direct interactions with regulatory proteins and serves as a scaffold for the assembly of a functional preinitiation complex with RNA polymerase II and the general transcription factors. The polypeptide is Mediator of RNA polymerase II transcription subunit 20 (SRB2) (Candida glabrata (strain ATCC 2001 / BCRC 20586 / JCM 3761 / NBRC 0622 / NRRL Y-65 / CBS 138) (Yeast)).